The primary structure comprises 147 residues: Mid1-interacting protein 1-B (147 aa).

Belongs to the SPOT14 family.

It is found in the nucleus. The protein localises to the cytoplasm. It localises to the cytoskeleton. Functionally, involved in stabilization of microtubules. May play a role in the regulation of lipogenesis. This chain is Mid1-interacting protein 1-B, found in Danio rerio (Zebrafish).